We begin with the raw amino-acid sequence, 332 residues long: Glyceraldehyde-3-phosphate dehydrogenase 1 (332 aa).

Residues Arg-11, Ile-12, Asp-33, and Thr-120 each contribute to the NAD(+) site. D-glyceraldehyde 3-phosphate is bound by residues 149–151, Thr-180, 209–210, and Arg-232; these read SCT and TG. The active-site Nucleophile is the Cys-150. The NAD(+) site is built by Asn-314 and Tyr-318.

Belongs to the glyceraldehyde-3-phosphate dehydrogenase family. Homotetramer.

It is found in the cytoplasm. The enzyme catalyses D-glyceraldehyde 3-phosphate + phosphate + NAD(+) = (2R)-3-phospho-glyceroyl phosphate + NADH + H(+). It carries out the reaction NADH + H2O = (6R)-NADHX. It catalyses the reaction NADH + H2O = (6S)-NADHX. The catalysed reaction is NADPH + H2O = (6R)-NADPHX. The enzyme catalyses NADPH + H2O = (6S)-NADPHX. It participates in carbohydrate degradation; glycolysis; pyruvate from D-glyceraldehyde 3-phosphate: step 1/5. Its function is as follows. Glyceraldehyde-3-phosphate dehydrogenase (GAPDH) involved in glycolysis and gluconeogenesis. Catalyzes the reaction of glyceraldehyde-3-phosphate to 1,3 bis-phosphoglycerate. The contribution of the TDH1, TDH2, and TDH3 to the total glyceraldehyde-3-phosphate dehydrogenase activity is 10-15, 25-30, and 50-60%, respectively. May be involved in a process other than glycolysis because it is synthesized by cells in stationary phase. In terms of biological role, as a side activity, catalyzes the hydration of the nicotinamide ring of NADH or NADPH at the C6 position to give the corresponding hydrates, NADHX and NADPHX, which exist as R and S epimers, that cannot act as electron donors or acceptors and inhibit several dehydrogenases, making them toxic. This is Glyceraldehyde-3-phosphate dehydrogenase 1 from Saccharomyces cerevisiae (strain ATCC 204508 / S288c) (Baker's yeast).